The following is a 393-amino-acid chain: NAD(P)H-quinone oxidoreductase subunit H, chloroplastic (393 aa).

It belongs to the complex I 49 kDa subunit family. NDH is composed of at least 16 different subunits, 5 of which are encoded in the nucleus.

It is found in the plastid. The protein resides in the chloroplast thylakoid membrane. The enzyme catalyses a plastoquinone + NADH + (n+1) H(+)(in) = a plastoquinol + NAD(+) + n H(+)(out). It carries out the reaction a plastoquinone + NADPH + (n+1) H(+)(in) = a plastoquinol + NADP(+) + n H(+)(out). Its function is as follows. NDH shuttles electrons from NAD(P)H:plastoquinone, via FMN and iron-sulfur (Fe-S) centers, to quinones in the photosynthetic chain and possibly in a chloroplast respiratory chain. The immediate electron acceptor for the enzyme in this species is believed to be plastoquinone. Couples the redox reaction to proton translocation, and thus conserves the redox energy in a proton gradient. In Crucihimalaya wallichii (Rock-cress), this protein is NAD(P)H-quinone oxidoreductase subunit H, chloroplastic.